Consider the following 337-residue polypeptide: BRI1 kinase inhibitor 1 (337 aa).

The segment covering 1-25 (METNLQQVKNSSQTFSEKQNPKQEA) has biased composition (polar residues). Disordered regions lie at residues 1–38 (METNLQQVKNSSQTFSEKQNPKQEASPSPISSTCSSPS) and 51–72 (SSSSKHISPTLRSPSKTTSSYQ). The segment covering 26 to 38 (SPSPISSTCSSPS) has biased composition (low complexity). Y211 carries the phosphotyrosine modification. The interval 270–310 (SAPASMRTSPTNSGHLRVSTAGLSSSSGSTSSSSSDSTMEE) is disordered. A compositionally biased stretch (low complexity) spans 288 to 310 (STAGLSSSSGSTSSSSSDSTMEE).

In terms of assembly, interacts (via C-terminus) with BRI1 (via kinase domain). In terms of processing, phosphorylated on Tyr-211 in response to brassinosteroid perception, leading to its inactivation: once phosphorylated, displaced into the cytosol where it is inactive. Expressed in leaves, petioles, shoot apices, hypocotyls, roots and flowers.

The protein localises to the cell membrane. The protein resides in the cytoplasm. In terms of biological role, negative regulator of brassinosteroid signaling. When associated to the membrane, limits the interaction of BRI1 with BAK1 by binding to the kinase-inactive form of BRI1. The chain is BRI1 kinase inhibitor 1 (BKI1) from Arabidopsis thaliana (Mouse-ear cress).